Here is a 223-residue protein sequence, read N- to C-terminus: Large ribosomal subunit protein bL25 (223 aa).

It belongs to the bacterial ribosomal protein bL25 family. CTC subfamily. Part of the 50S ribosomal subunit; part of the 5S rRNA/L5/L18/L25 subcomplex. Contacts the 5S rRNA. Binds to the 5S rRNA independently of L5 and L18.

Functionally, this is one of the proteins that binds to the 5S RNA in the ribosome where it forms part of the central protuberance. This is Large ribosomal subunit protein bL25 from Albidiferax ferrireducens (strain ATCC BAA-621 / DSM 15236 / T118) (Rhodoferax ferrireducens).